Consider the following 507-residue polypeptide: ATP synthase subunit alpha, chloroplastic (507 aa).

ATP is bound at residue 170 to 177 (GDRQTGKT).

Belongs to the ATPase alpha/beta chains family. F-type ATPases have 2 components, CF(1) - the catalytic core - and CF(0) - the membrane proton channel. CF(1) has five subunits: alpha(3), beta(3), gamma(1), delta(1), epsilon(1). CF(0) has four main subunits: a, b, b' and c.

The protein resides in the plastid. The protein localises to the chloroplast thylakoid membrane. It catalyses the reaction ATP + H2O + 4 H(+)(in) = ADP + phosphate + 5 H(+)(out). Produces ATP from ADP in the presence of a proton gradient across the membrane. The alpha chain is a regulatory subunit. This Morus indica (Mulberry) protein is ATP synthase subunit alpha, chloroplastic.